We begin with the raw amino-acid sequence, 342 residues long: Anthranilate phosphoribosyltransferase (342 aa).

Residues Gly-84, 87 to 88 (GD), Thr-92, 94 to 97 (NIST), 112 to 120 (KHGNRGVSS), and Ser-124 each bind 5-phospho-alpha-D-ribose 1-diphosphate. Gly-84 is an anthranilate binding site. Ser-96 is a binding site for Mg(2+). Asn-115 is an anthranilate binding site. Position 170 (Arg-170) interacts with anthranilate. Asp-229 and Glu-230 together coordinate Mg(2+).

The protein belongs to the anthranilate phosphoribosyltransferase family. Homodimer. Mg(2+) serves as cofactor.

It catalyses the reaction N-(5-phospho-beta-D-ribosyl)anthranilate + diphosphate = 5-phospho-alpha-D-ribose 1-diphosphate + anthranilate. Its pathway is amino-acid biosynthesis; L-tryptophan biosynthesis; L-tryptophan from chorismate: step 2/5. Its function is as follows. Catalyzes the transfer of the phosphoribosyl group of 5-phosphorylribose-1-pyrophosphate (PRPP) to anthranilate to yield N-(5'-phosphoribosyl)-anthranilate (PRA). The sequence is that of Anthranilate phosphoribosyltransferase from Cupriavidus metallidurans (strain ATCC 43123 / DSM 2839 / NBRC 102507 / CH34) (Ralstonia metallidurans).